We begin with the raw amino-acid sequence, 289 residues long: Elongation factor Ts (289 aa).

The tract at residues 82 to 85 is involved in Mg(2+) ion dislocation from EF-Tu; it reads TDFV.

This sequence belongs to the EF-Ts family.

The protein localises to the cytoplasm. Functionally, associates with the EF-Tu.GDP complex and induces the exchange of GDP to GTP. It remains bound to the aminoacyl-tRNA.EF-Tu.GTP complex up to the GTP hydrolysis stage on the ribosome. The polypeptide is Elongation factor Ts (Marinobacter nauticus (strain ATCC 700491 / DSM 11845 / VT8) (Marinobacter aquaeolei)).